The following is a 512-amino-acid chain: Serine--tRNA ligase, cytoplasmic (512 aa).

An N-acetylmethionine modification is found at M1. The tract at residues 9–61 (RVDKGGDPALIRETQEKRFKDPGLVDQLVKADSEWRRCRFRADNLNKLKNLCS) is interaction with tRNA. The residue at position 241 (S241) is a Phosphoserine. L-serine is bound by residues T271 and R302. Residues 302–304 (RQE) and 318–321 (VHQF) each bind ATP. Residue K323 is modified to N6-acetyllysine. An L-serine-binding site is contributed by E325. ATP is bound at residue 391–394 (ELVS). N427 and T429 together coordinate L-serine. The interval 472-512 (KPAPIDQEPSKKQKKQHEGSKKKAKEVTLESQLQNMEVTEA) is disordered. The span at 479 to 499 (EPSKKQKKQHEGSKKKAKEVT) shows a compositional bias: basic and acidic residues. The Nuclear localization signal motif lies at 482-494 (KKQKKQHEGSKKK). A compositionally biased stretch (polar residues) spans 500 to 512 (LESQLQNMEVTEA).

It belongs to the class-II aminoacyl-tRNA synthetase family. Type-1 seryl-tRNA synthetase subfamily. In terms of assembly, homodimer. The tRNA molecule may bind across the dimer. Interacts with SIRT2. Interacts with METTL6; interaction is required for the tRNA N(3)-methylcytidine methyltransferase activity of METTL6.

The protein resides in the cytoplasm. The protein localises to the nucleus. The enzyme catalyses tRNA(Ser) + L-serine + ATP = L-seryl-tRNA(Ser) + AMP + diphosphate + H(+). The catalysed reaction is tRNA(Sec) + L-serine + ATP = L-seryl-tRNA(Sec) + AMP + diphosphate + H(+). The protein operates within aminoacyl-tRNA biosynthesis; selenocysteinyl-tRNA(Sec) biosynthesis; L-seryl-tRNA(Sec) from L-serine and tRNA(Sec): step 1/1. Functionally, catalyzes the attachment of serine to tRNA(Ser) in a two-step reaction: serine is first activated by ATP to form Ser-AMP and then transferred to the acceptor end of tRNA(Ser). Is probably also able to aminoacylate tRNA(Sec) with serine, to form the misacylated tRNA L-seryl-tRNA(Sec), which will be further converted into selenocysteinyl-tRNA(Sec). In the nucleus, binds to the VEGFA core promoter and prevents MYC binding and transcriptional activation by MYC. Recruits SIRT2 to the VEGFA promoter, promoting deacetylation of histone H4 at 'Lys-16' (H4K16). Thereby, inhibits the production of VEGFA and sprouting angiogenesis mediated by VEGFA. In Cricetulus griseus (Chinese hamster), this protein is Serine--tRNA ligase, cytoplasmic (SARS1).